A 986-amino-acid polypeptide reads, in one-letter code: Leucine-rich repeat receptor-like kinase protein HAR1 (986 aa).

A signal peptide spans 1-25; sequence MRIRVSYLLVLCFTLIWFRWTVVYS. LRR repeat units follow at residues 71 to 97, 98 to 121, 123 to 145, 146 to 170, 171 to 196, 198 to 218, 243 to 267, 268 to 291, 293 to 314, 316 to 339, 340 to 363, 365 to 387, 388 to 411, 412 to 435, 437 to 458, 459 to 482, 483 to 506, 508 to 530, 531 to 554, 555 to 578, and 579 to 603; these read DQNLRVVALNVTLVPLFGHLPPEIGLL, EKLENLTISMNNLTDQLPSDLASL, SLKVLNISHNLFSGQFPGNITVG, MTELEALDAYDNSFSGPLPEEIVKL, EKLKYLHLAGNYFSGTIPESYSEFQS, EFLGLNANSLTGRVPESLAKL, MENLRLLEMANCNLTGEIPPSLGNL, TKLHSLFVQMNNLTGTIPPELSSM, SLMSLDLSINDLTGEIPESFSK, KNLTLMNFFQNKFRGSLPSFIGDL, PNLETLQVWENNFSFVLPHNLGGN, RFLYFDVTKNHLTGLIPPDLCKS, GRLKTFIITDNFFRGPIPKGIGEC, RSLTKIRVANNFLDGPVPPGVFQL, SVTITELSNNRLNGELPSVISG, ESLGTLTLSNNLFTGKIPAAMKNL, RALQSLSLDANEFIGEIPGGVFEI, MLTKVNISGNNLTGPIPTTITHR, ASLTAVDLSRNNLAGEVPKGMKNL, MDLSILNLSRNEISGPVPDEIRFM, and TSLTTLDLSSNNFTGTVPTGGQFLV. N80, N102, N109, N128, and N141 each carry an N-linked (GlcNAc...) asparagine glycan. N-linked (GlcNAc...) asparagine glycosylation is found at N255, N266, and N279. N-linked (GlcNAc...) asparagine glycosylation is found at N317 and N351. 2 N-linked (GlcNAc...) asparagine glycosylation sites follow: N513 and N518. Residues N561 and N590 are each glycosylated (N-linked (GlcNAc...) asparagine). A helical membrane pass occupies residues 645 to 665; the sequence is IVIGIALATAVLLVAVTVHVV. A Protein kinase domain is found at 695-971; that stretch reads LKEENIIGKG…TMREVVHMLT (277 aa). Residues 701–709 and K723 contribute to the ATP site; that span reads IGKGGAGIV. D820 acts as the Proton acceptor in catalysis.

It belongs to the protein kinase superfamily. Ser/Thr protein kinase family. Expressed in roots, leaves, stems and flowers.

Its subcellular location is the cell membrane. The enzyme catalyses L-seryl-[protein] + ATP = O-phospho-L-seryl-[protein] + ADP + H(+). It catalyses the reaction L-threonyl-[protein] + ATP = O-phospho-L-threonyl-[protein] + ADP + H(+). LRR receptor kinase involved in the regulation of root and shoot growth, and root nodule organogenesis. Involved in long distance nodulation signaling events. Involved in the autoregulation of nodulation (AON), a long distance systemic signaling from root to shoot and back again, which allows legumes to limit the number of root nodules formed based on available nitrogen and previous rhizobial colonization. Acts from shoot to root to control AON. Involved in the regulation of root colonization by arbuscular mycorrhizal (AM) fungi. The protein is Leucine-rich repeat receptor-like kinase protein HAR1 of Lotus japonicus (Lotus corniculatus var. japonicus).